The following is a 353-amino-acid chain: UPF0658 Golgi apparatus membrane protein C23H3.04 (353 aa).

Helical transmembrane passes span 39–59 (IFFL…EGYC), 76–96 (SLPI…YLCV), 103–123 (NIIE…YSIV), 172–192 (PFLI…GFLA), 226–246 (LLKI…MVLP), 249–269 (AVVE…ILTL), 281–301 (LMMT…FKII), and 318–338 (MITT…AIGF).

Belongs to the UPF0658 family.

It is found in the golgi apparatus membrane. This is UPF0658 Golgi apparatus membrane protein C23H3.04 from Schizosaccharomyces pombe (strain 972 / ATCC 24843) (Fission yeast).